A 289-amino-acid polypeptide reads, in one-letter code: 4-diphosphocytidyl-2-C-methyl-D-erythritol kinase (289 aa).

Lys-11 is an active-site residue. Residue 96–106 coordinates ATP; sequence PVAAGIGGGSS. Asp-138 is an active-site residue.

Belongs to the GHMP kinase family. IspE subfamily.

The catalysed reaction is 4-CDP-2-C-methyl-D-erythritol + ATP = 4-CDP-2-C-methyl-D-erythritol 2-phosphate + ADP + H(+). It functions in the pathway isoprenoid biosynthesis; isopentenyl diphosphate biosynthesis via DXP pathway; isopentenyl diphosphate from 1-deoxy-D-xylulose 5-phosphate: step 3/6. Catalyzes the phosphorylation of the position 2 hydroxy group of 4-diphosphocytidyl-2C-methyl-D-erythritol. The protein is 4-diphosphocytidyl-2-C-methyl-D-erythritol kinase of Azorhizobium caulinodans (strain ATCC 43989 / DSM 5975 / JCM 20966 / LMG 6465 / NBRC 14845 / NCIMB 13405 / ORS 571).